The following is a 453-amino-acid chain: Bifunctional protein GlmU (453 aa).

The interval 1 to 227 is pyrophosphorylase; it reads MNKLSVVILA…LMEVEGVNNR (227 aa). UDP-N-acetyl-alpha-D-glucosamine contacts are provided by residues 9–12, Lys-23, Gln-74, 79–80, 101–103, Gly-138, Glu-152, Asn-167, and Asn-225; these read LAAG, GT, and YGD. Position 103 (Asp-103) interacts with Mg(2+). Asn-225 is a binding site for Mg(2+). Positions 228–248 are linker; that stretch reads LQLANLERHYQRKQVEKLLLA. Residues 249–453 are N-acetyltransferase; that stretch reads GVTFADPARF…ISNWQRPKRK (205 aa). 2 residues coordinate UDP-N-acetyl-alpha-D-glucosamine: Arg-331 and Lys-349. His-361 (proton acceptor) is an active-site residue. The UDP-N-acetyl-alpha-D-glucosamine site is built by Tyr-364 and Asn-375. Residues Ala-378, 384 to 385, Ser-403, Ala-421, and Arg-438 contribute to the acetyl-CoA site; that span reads NY.

This sequence in the N-terminal section; belongs to the N-acetylglucosamine-1-phosphate uridyltransferase family. The protein in the C-terminal section; belongs to the transferase hexapeptide repeat family. Homotrimer. It depends on Mg(2+) as a cofactor.

Its subcellular location is the cytoplasm. The catalysed reaction is alpha-D-glucosamine 1-phosphate + acetyl-CoA = N-acetyl-alpha-D-glucosamine 1-phosphate + CoA + H(+). It catalyses the reaction N-acetyl-alpha-D-glucosamine 1-phosphate + UTP + H(+) = UDP-N-acetyl-alpha-D-glucosamine + diphosphate. It functions in the pathway nucleotide-sugar biosynthesis; UDP-N-acetyl-alpha-D-glucosamine biosynthesis; N-acetyl-alpha-D-glucosamine 1-phosphate from alpha-D-glucosamine 6-phosphate (route II): step 2/2. The protein operates within nucleotide-sugar biosynthesis; UDP-N-acetyl-alpha-D-glucosamine biosynthesis; UDP-N-acetyl-alpha-D-glucosamine from N-acetyl-alpha-D-glucosamine 1-phosphate: step 1/1. It participates in bacterial outer membrane biogenesis; LPS lipid A biosynthesis. Catalyzes the last two sequential reactions in the de novo biosynthetic pathway for UDP-N-acetylglucosamine (UDP-GlcNAc). The C-terminal domain catalyzes the transfer of acetyl group from acetyl coenzyme A to glucosamine-1-phosphate (GlcN-1-P) to produce N-acetylglucosamine-1-phosphate (GlcNAc-1-P), which is converted into UDP-GlcNAc by the transfer of uridine 5-monophosphate (from uridine 5-triphosphate), a reaction catalyzed by the N-terminal domain. This chain is Bifunctional protein GlmU, found in Histophilus somni (strain 2336) (Haemophilus somnus).